A 396-amino-acid polypeptide reads, in one-letter code: S-adenosylmethionine synthase 1 (396 aa).

Glu-12 is a Mg(2+) binding site. Residue His-18 coordinates ATP. Position 46 (Glu-46) interacts with K(+). L-methionine is bound by residues Glu-59 and Gln-102. ATP-binding positions include 170-172, 238-241, Asp-249, 255-256, Ala-272, Lys-276, and Lys-280; these read DGK, SGRF, and RK. Asp-249 contributes to the L-methionine binding site. Position 280 (Lys-280) interacts with L-methionine.

The protein belongs to the AdoMet synthase family. In terms of assembly, homotetramer. The cofactor is Mn(2+). It depends on Mg(2+) as a cofactor. Co(2+) serves as cofactor. K(+) is required as a cofactor.

Its subcellular location is the cytoplasm. The catalysed reaction is L-methionine + ATP + H2O = S-adenosyl-L-methionine + phosphate + diphosphate. It functions in the pathway amino-acid biosynthesis; S-adenosyl-L-methionine biosynthesis; S-adenosyl-L-methionine from L-methionine: step 1/1. Functionally, catalyzes the formation of S-adenosylmethionine from methionine and ATP. The reaction comprises two steps that are both catalyzed by the same enzyme: formation of S-adenosylmethionine (AdoMet) and triphosphate, and subsequent hydrolysis of the triphosphate. This Oryza sativa subsp. japonica (Rice) protein is S-adenosylmethionine synthase 1 (SAM1).